We begin with the raw amino-acid sequence, 83 residues long: Beta-defensin 119 (83 aa).

A signal peptide spans 1–20 (MKFLFLFLAILLAMEPVVSG). Intrachain disulfides connect C27-C54, C34-C48, and C38-C55.

This sequence belongs to the beta-defensin family.

The protein resides in the secreted. Has antibacterial activity. The sequence is that of Beta-defensin 119 (DEFB119) from Bos taurus (Bovine).